The chain runs to 179 residues: Protein TIFY 11a (179 aa).

The Tify domain maps to 62-97 (VDGGGQQFTIFYAGKVVVIDRCTPAMAAELMRFASA). Positions 115–140 (PIARKASLKRFLAKRKATPASARSSY) match the Jas motif. A Nuclear localization signal motif is present at residues 117-124 (ARKASLKR).

The protein belongs to the TIFY/JAZ family. In terms of assembly, interacts with BHLH148. Interacts with COI1A in a coronatine-dependent manner. Interacts with COI1B in a coronatine-dependent manner. Coronatine is an analog of jasmonoyl isoleucine (JA-Ile). Interacts with RSS3. Forms a ternary complex with RSS3 and BHLH094 in the nucleus. Interacts with BHLH062 and NINJA1. Interacts with MYB30. Post-translationally, ubiquitinated. Targeted for degradation by the SCF(COI1) E3 ubiquitin ligase-proteasome pathway during jasmonate signaling.

The protein localises to the nucleus. Repressor of jasmonate (JA) responses. Forms a ternary complex with RSS3 and BHLH94 to negatively regulate JA-responsive genes. Acts as a positive regulator of tolerance to salt stress. Involved in salt tolerance by modulating potassium homeostasis through JA signaling and regulation of the expression of potassium ion transporter genes. Acts as a transcriptional regulator targeted by the SCF(COI1) E3 ubiquitin ligase complexes in the JA signaling pathway, and interacts with BHLH062 that may directly regulate the ion transporter genes. Acts as a positive regulator of tolerance to dehydration stress. Acts as a negative regulator of tolerance to cold stress by interacting with MYB30. The protein is Protein TIFY 11a of Oryza sativa subsp. japonica (Rice).